The primary structure comprises 634 residues: Probable potassium transport system protein Kup (634 aa).

Helical transmembrane passes span 19–39, 62–82, 113–133, 150–170, 177–197, 225–245, 259–279, 291–311, 349–369, 379–399, 406–426, and 431–451; these read AVGL…TSPL, VLSL…VIFV, FVVV…MITP, GLEH…FLIQ, IGIL…ALGV, IGVA…ALYA, WFLL…ATIL, LLAP…ATVI, IYIG…VLGF, YGVA…VVIW, LWLG…FFAA, and VVQG…LMST.

Belongs to the HAK/KUP transporter (TC 2.A.72) family.

It localises to the cell inner membrane. The enzyme catalyses K(+)(in) + H(+)(in) = K(+)(out) + H(+)(out). In terms of biological role, transport of potassium into the cell. Likely operates as a K(+):H(+) symporter. In Pseudomonas paraeruginosa (strain DSM 24068 / PA7) (Pseudomonas aeruginosa (strain PA7)), this protein is Probable potassium transport system protein Kup.